The following is a 345-amino-acid chain: S-adenosylmethionine:tRNA ribosyltransferase-isomerase (345 aa).

It belongs to the QueA family. In terms of assembly, monomer.

It is found in the cytoplasm. The catalysed reaction is 7-aminomethyl-7-carbaguanosine(34) in tRNA + S-adenosyl-L-methionine = epoxyqueuosine(34) in tRNA + adenine + L-methionine + 2 H(+). It functions in the pathway tRNA modification; tRNA-queuosine biosynthesis. Its function is as follows. Transfers and isomerizes the ribose moiety from AdoMet to the 7-aminomethyl group of 7-deazaguanine (preQ1-tRNA) to give epoxyqueuosine (oQ-tRNA). This Helicobacter pylori (strain Shi470) protein is S-adenosylmethionine:tRNA ribosyltransferase-isomerase.